The chain runs to 477 residues: Glutamyl-tRNA(Gln) amidotransferase subunit A (477 aa).

Active-site charge relay system residues include Lys76 and Ser151. Residue Ser175 is the Acyl-ester intermediate of the active site.

This sequence belongs to the amidase family. GatA subfamily. In terms of assembly, heterotrimer of A, B and C subunits.

It catalyses the reaction L-glutamyl-tRNA(Gln) + L-glutamine + ATP + H2O = L-glutaminyl-tRNA(Gln) + L-glutamate + ADP + phosphate + H(+). Allows the formation of correctly charged Gln-tRNA(Gln) through the transamidation of misacylated Glu-tRNA(Gln) in organisms which lack glutaminyl-tRNA synthetase. The reaction takes place in the presence of glutamine and ATP through an activated gamma-phospho-Glu-tRNA(Gln). This Prosthecochloris aestuarii (strain DSM 271 / SK 413) protein is Glutamyl-tRNA(Gln) amidotransferase subunit A.